The sequence spans 257 residues: Probable enoyl-CoA hydratase echA17 (257 aa).

It belongs to the enoyl-CoA hydratase/isomerase family.

The enzyme catalyses a (3S)-3-hydroxyacyl-CoA = a (2E)-enoyl-CoA + H2O. The catalysed reaction is a 4-saturated-(3S)-3-hydroxyacyl-CoA = a (3E)-enoyl-CoA + H2O. Functionally, could possibly oxidize fatty acids using specific components. This Mycolicibacterium paratuberculosis (strain ATCC BAA-968 / K-10) (Mycobacterium paratuberculosis) protein is Probable enoyl-CoA hydratase echA17 (echA17).